The sequence spans 100 residues: Nucleoid-associated protein HPSH_00175 (100 aa).

The protein belongs to the YbaB/EbfC family. In terms of assembly, homodimer.

It localises to the cytoplasm. The protein resides in the nucleoid. Binds to DNA and alters its conformation. May be involved in regulation of gene expression, nucleoid organization and DNA protection. The protein is Nucleoid-associated protein HPSH_00175 of Helicobacter pylori (strain Shi470).